The following is a 229-amino-acid chain: Aminopyrimidine aminohydrolase (229 aa).

Asp-44 lines the substrate pocket. Cys-137 acts as the Nucleophile in catalysis. Substrate contacts are provided by Tyr-141 and Tyr-167. Glu-208 acts as the Proton donor in catalysis.

Belongs to the TenA family. As to quaternary structure, homotetramer.

It carries out the reaction 4-amino-5-aminomethyl-2-methylpyrimidine + H2O = 4-amino-5-hydroxymethyl-2-methylpyrimidine + NH4(+). It catalyses the reaction thiamine + H2O = 5-(2-hydroxyethyl)-4-methylthiazole + 4-amino-5-hydroxymethyl-2-methylpyrimidine + H(+). It functions in the pathway cofactor biosynthesis; thiamine diphosphate biosynthesis. Its function is as follows. Catalyzes an amino-pyrimidine hydrolysis reaction at the C5' of the pyrimidine moiety of thiamine compounds, a reaction that is part of a thiamine salvage pathway. Thus, catalyzes the conversion of 4-amino-5-aminomethyl-2-methylpyrimidine to 4-amino-5-hydroxymethyl-2-methylpyrimidine (HMP). Is also able to catalyze the hydrolytic cleavage of thiamine; however, this thiaminase activity may not be physiologically relevant. Therefore, is probably involved in the regeneration of the thiamine pyrimidine from thiamine degraded products present in the environment, rather than in thiamine degradation. The sequence is that of Aminopyrimidine aminohydrolase from Staphylococcus aureus (strain MRSA252).